A 325-amino-acid polypeptide reads, in one-letter code: Leucine-rich repeat protein FLOR 1 (325 aa).

LRR repeat units follow at residues 65–88 (NRRV…QIGD), 89–114 (LVDL…ITKL), 115–140 (KNLN…ELKS), 142–162 (TFLD…LSQM), 163–185 (PKLE…SFGS), 187–211 (VGNV…LSKY), 213–233 (FNAV…FFGR), 234–256 (NKTT…KVKF), 257–280 (ARSI…ALTK), and 281–305 (LHLE…LLQT).

This sequence belongs to the polygalacturonase-inhibiting protein family. As to quaternary structure, interacts with MADS domain transcription factors during flower development. Component of a complex made of FLOR1, VSP1 and AGAMOUS (AG). Binds directly with AG. In terms of tissue distribution, confined to flowers and inflorescences (e.g. inflorescence meristems, floral meristems, stamens and carpels).

The protein localises to the cytoplasm. It is found in the nucleus. It localises to the perinuclear region. Its subcellular location is the cell membrane. In terms of biological role, promotes flowering transition in long days (LD). The polypeptide is Leucine-rich repeat protein FLOR 1 (Arabidopsis thaliana (Mouse-ear cress)).